Consider the following 878-residue polypeptide: Pyruvate dehydrogenase phosphatase regulatory subunit, mitochondrial (878 aa).

Residues 1–93 (MLYRLLSIVQ…CAGILSTARH (93 aa)) constitute a mitochondrion transit peptide.

This sequence belongs to the GcvT family. Heterodimer of a catalytic (PDP1) and a regulatory (PDPR) subunit.

It is found in the mitochondrion matrix. Decreases the sensitivity of PDP1 to magnesium ions, and this inhibition is reversed by the polyamine spermine. The protein is Pyruvate dehydrogenase phosphatase regulatory subunit, mitochondrial (Pdpr) of Mus musculus (Mouse).